The primary structure comprises 128 residues: MRHYEIVFMVHPDQSEQVPGMIERYTGAITTSGGTIHRLEDWGRRQLAYPIDKLHKAHYVLMNVEAEQAVIDELETNFRFNDAVIRNMIMRTKHAVTEVSPMAKAKEERFTRRDDERREEATEAASEE.

Residues 100–128 (SPMAKAKEERFTRRDDERREEATEAASEE) form a disordered region. The segment covering 104-121 (KAKEERFTRRDDERREEA) has biased composition (basic and acidic residues).

The protein belongs to the bacterial ribosomal protein bS6 family.

In terms of biological role, binds together with bS18 to 16S ribosomal RNA. This is Small ribosomal subunit protein bS6 from Aeromonas hydrophila subsp. hydrophila (strain ATCC 7966 / DSM 30187 / BCRC 13018 / CCUG 14551 / JCM 1027 / KCTC 2358 / NCIMB 9240 / NCTC 8049).